The following is a 307-amino-acid chain: Protoheme IX farnesyltransferase (307 aa).

Helical transmembrane passes span 32-52, 65-85, 108-128, 131-151, 158-178, 186-206, 251-271, and 287-307; these read MGIVNSNTLTVFTGFWLALHF, FFTIVGSGLVMAGVCCLNNYI, PGFALTFGLVILLLGFVFLLL, PMAVLMGFIGAFTYVVLYSLW, LNTVVGSISGAVPPLIGWAAI, IAWMLFLIMFIWQIPHFLALA, LGITFMVIATLLNIGWIVLGF, and FVYSLNYLTILFVSMIVVTFF.

The protein belongs to the UbiA prenyltransferase family. Protoheme IX farnesyltransferase subfamily. Interacts with CtaA.

The protein localises to the cell membrane. It catalyses the reaction heme b + (2E,6E)-farnesyl diphosphate + H2O = Fe(II)-heme o + diphosphate. It participates in porphyrin-containing compound metabolism; heme O biosynthesis; heme O from protoheme: step 1/1. Converts heme B (protoheme IX) to heme O by substitution of the vinyl group on carbon 2 of heme B porphyrin ring with a hydroxyethyl farnesyl side group. This is Protoheme IX farnesyltransferase from Bacillus anthracis (strain A0248).